A 379-amino-acid chain; its full sequence is UDP-4-amino-4-deoxy-L-arabinose--oxoglutarate aminotransferase (379 aa).

The residue at position 182 (Lys-182) is an N6-(pyridoxal phosphate)lysine.

Belongs to the DegT/DnrJ/EryC1 family. ArnB subfamily. As to quaternary structure, homodimer. The cofactor is pyridoxal 5'-phosphate.

It carries out the reaction UDP-4-amino-4-deoxy-beta-L-arabinose + 2-oxoglutarate = UDP-beta-L-threo-pentopyranos-4-ulose + L-glutamate. It functions in the pathway nucleotide-sugar biosynthesis; UDP-4-deoxy-4-formamido-beta-L-arabinose biosynthesis; UDP-4-deoxy-4-formamido-beta-L-arabinose from UDP-alpha-D-glucuronate: step 2/3. It participates in bacterial outer membrane biogenesis; lipopolysaccharide biosynthesis. Catalyzes the conversion of UDP-4-keto-arabinose (UDP-Ara4O) to UDP-4-amino-4-deoxy-L-arabinose (UDP-L-Ara4N). The modified arabinose is attached to lipid A and is required for resistance to polymyxin and cationic antimicrobial peptides. This Salmonella heidelberg (strain SL476) protein is UDP-4-amino-4-deoxy-L-arabinose--oxoglutarate aminotransferase.